A 267-amino-acid chain; its full sequence is Undecaprenyl-diphosphatase (267 aa).

7 helical membrane-spanning segments follow: residues 1–21 (MPLL…FLPV), 40–60 (GQAI…LFFW), 85–105 (LALG…FLYF), 112–132 (LRSV…LYIA), 188–208 (IAML…GTEV), 219–239 (DMGI…ALMM), and 245–265 (VSFT…LFIA).

The protein belongs to the UppP family.

It localises to the cell inner membrane. The enzyme catalyses di-trans,octa-cis-undecaprenyl diphosphate + H2O = di-trans,octa-cis-undecaprenyl phosphate + phosphate + H(+). In terms of biological role, catalyzes the dephosphorylation of undecaprenyl diphosphate (UPP). Confers resistance to bacitracin. This Ruegeria sp. (strain TM1040) (Silicibacter sp.) protein is Undecaprenyl-diphosphatase.